A 308-amino-acid polypeptide reads, in one-letter code: AGFYVDGNTLYDANGQPFVMRGINHGHAWYKDTASTAIPAIAEQGANTIRIVLSDGGQWEKDDIDTIREVIELAEQNKMVAVVEVHDATGRDSRSDLNRAVDYWIEMKDALIGKEDTVIINIANEWYGSWDGSAWADGYIDVIPKLRDAGLTHTLMVDAAGWGQYPQSIHDYGQDVFNADPLKNTMFSIHMYEYAGGDANTVRSNIDRVIDQDLALVIGEFGHRHTDGDVDEDTILSYSEETGTGWLAWSWKGNSTEWDYLDLSEDWAGQHLTDWGNRIVHGADGLQETSKPSTVFTDDNGGHPEPPT.

E125 (proton donor) is an active-site residue. The active-site Nucleophile is the E220. The disordered stretch occupies residues 284–308 (DGLQETSKPSTVFTDDNGGHPEPPT). A compositionally biased stretch (polar residues) spans 287 to 297 (QETSKPSTVFT).

It belongs to the glycosyl hydrolase 5 (cellulase A) family.

It carries out the reaction Random hydrolysis of (1-&gt;4)-beta-D-mannosidic linkages in mannans, galactomannans and glucomannans.. Functionally, catalyzes the endo hydrolysis of beta-1,4-linked mannan, galactomannan and glucomannan. It is able to hydrolyze mannosidic linkages that are flanked by mannose or glucose. The protein is Mannan endo-1,4-beta-mannosidase of Salipaludibacillus agaradhaerens (Bacillus agaradhaerens).